The chain runs to 403 residues: Na(+)/H(+) antiporter NhaA (403 aa).

12 helical membrane passes run 25–45 (IAGLVLLVSMLVAFFWVNSPF), 70–90 (LILWINEGLMIVFFFLIGLEI), 105–125 (IALPAFAALGGMLVPAAIFLA), 136–156 (GWAVPAATDIVLALALLAMLG), 165–185 (VFLTALAIFDDFGTLVIIALA), 188–208 (EGLSLPSLLMAALGTLALIVL), 213–233 (VASLTAYVLVGVFVWVSVLES), 234–254 (GVHSTLAGVIIAWCIPMRVSG), 269–289 (VALLIVPLFAFFNAGIDLGGV), 302–322 (IILGLFVGKQVGVMLGVGLAV), 340–360 (GAALLSGVGFTMSLFVAGLAF), and 369–389 (VNLAVVVGSVLSATGGLVVLA).

It belongs to the NhaA Na(+)/H(+) (TC 2.A.33) antiporter family.

It is found in the cell inner membrane. It carries out the reaction Na(+)(in) + 2 H(+)(out) = Na(+)(out) + 2 H(+)(in). In terms of biological role, na(+)/H(+) antiporter that extrudes sodium in exchange for external protons. The protein is Na(+)/H(+) antiporter NhaA of Maricaulis maris (strain MCS10) (Caulobacter maris).